Consider the following 688-residue polypeptide: Protein sel-1 homolog 2 (688 aa).

Residues 1-23 form the signal peptide; sequence MKPLSLLIEILIILGVTIKTIKA. Residues 24 to 662 are Extracellular-facing; the sequence is EEHNKRQKER…RWNWLKLDNT (639 aa). An N-linked (GlcNAc...) asparagine glycan is attached at Asn34. Sel1-like repeat units lie at residues 107-142, 143-178, 179-214, 215-250, 297-333, 334-370, 371-406, 407-442, 443-478, 551-586, and 588-623; these read GDQL…DMGN, LKAM…KEGS, CKAQ…AGGN, MMSQ…DYIA, VQIQ…KAGS, ANAM…SKGN, AIGL…EKGW, PDAQ…QSGQ, PLAI…ELGH, AFAR…NKYH, and AQAM…QTSP. Residues 663–683 traverse the membrane as a helical segment; it reads IGPHWDLFVIGLIVPGLILLL. The Cytoplasmic segment spans residues 684 to 688; sequence RNHHG.

Belongs to the sel-1 family.

It localises to the membrane. The protein resides in the cell projection. It is found in the cilium. Its subcellular location is the nucleus speckle. The protein is Protein sel-1 homolog 2 (SEL1L2) of Homo sapiens (Human).